Consider the following 280-residue polypeptide: Diaminopimelate epimerase (280 aa).

Asparagine 13 and asparagine 66 together coordinate substrate. Catalysis depends on cysteine 75, which acts as the Proton donor. Substrate contacts are provided by residues 76–77, asparagine 162, asparagine 195, and 213–214; these read GN and ER. The Proton acceptor role is filled by cysteine 222. 223–224 is a binding site for substrate; the sequence is GT.

The protein belongs to the diaminopimelate epimerase family. As to quaternary structure, homodimer.

It is found in the cytoplasm. It carries out the reaction (2S,6S)-2,6-diaminopimelate = meso-2,6-diaminopimelate. Its pathway is amino-acid biosynthesis; L-lysine biosynthesis via DAP pathway; DL-2,6-diaminopimelate from LL-2,6-diaminopimelate: step 1/1. Catalyzes the stereoinversion of LL-2,6-diaminopimelate (L,L-DAP) to meso-diaminopimelate (meso-DAP), a precursor of L-lysine and an essential component of the bacterial peptidoglycan. This is Diaminopimelate epimerase from Synechococcus elongatus (strain ATCC 33912 / PCC 7942 / FACHB-805) (Anacystis nidulans R2).